Consider the following 538-residue polypeptide: MAVISKKIPAPDKVEIKTALLSVFDKTGIVELAQALSERGVRLLSTGGTYKAIAAAGLAVTDVSDITGFPEIMDGRVKTLHPTVHGGLLAIRDDNEHQEAMKKHGIEGIDLAVINLYPFEEVRAAGGDYPTTVENIDIGGPAMIRASAKNHAYVTILTDPNDYAEFKEQLSADAGKTAYAFRQRMAAKAYARTAAYDAAISNWFAEALSIDTPRHRVIGGVLKEEMRYGENPHQRAAFYVTGEKRPGVSTAVLLQGKQLSYNNINDTDAAYELVAEFLPERAPACAIIKHANPCGVATGSSLIEAYQRALACDSVSAFGGIIALNQILDAETAEEIVKLFTEVIIAPDVTEEAKAIVARKPNLRLLSAGGLPDPRVAGLTAKTVSGGLLVQSRDNGMVEDLELKVVTRRAPTGQELEDMKFAFKVGKHVKSNAVVYAKDGQTAGIGAGQMSRVDSARIAALKAEEAAKALGLAVPMTKGSAVASEAFLPFADGLLSMIAAGATAVIQPGGSMRDQEVIDAANEHGIAMVFTGMRHFRH.

The MGS-like domain occupies 8 to 158 (IPAPDKVEIK…KNHAYVTILT (151 aa)).

This sequence belongs to the PurH family.

It carries out the reaction (6R)-10-formyltetrahydrofolate + 5-amino-1-(5-phospho-beta-D-ribosyl)imidazole-4-carboxamide = 5-formamido-1-(5-phospho-D-ribosyl)imidazole-4-carboxamide + (6S)-5,6,7,8-tetrahydrofolate. The enzyme catalyses IMP + H2O = 5-formamido-1-(5-phospho-D-ribosyl)imidazole-4-carboxamide. The protein operates within purine metabolism; IMP biosynthesis via de novo pathway; 5-formamido-1-(5-phospho-D-ribosyl)imidazole-4-carboxamide from 5-amino-1-(5-phospho-D-ribosyl)imidazole-4-carboxamide (10-formyl THF route): step 1/1. It functions in the pathway purine metabolism; IMP biosynthesis via de novo pathway; IMP from 5-formamido-1-(5-phospho-D-ribosyl)imidazole-4-carboxamide: step 1/1. The protein is Bifunctional purine biosynthesis protein PurH of Rhizobium etli (strain ATCC 51251 / DSM 11541 / JCM 21823 / NBRC 15573 / CFN 42).